Reading from the N-terminus, the 631-residue chain is tRNA uridine 5-carboxymethylaminomethyl modification enzyme MnmG (631 aa).

FAD contacts are provided by residues 13 to 18 (GGGHAG), Val125, and Ser180. 273–287 (GPRYCPSIEDKVMRF) contacts NAD(+). FAD is bound at residue Gln370.

Belongs to the MnmG family. As to quaternary structure, homodimer. Heterotetramer of two MnmE and two MnmG subunits. FAD serves as cofactor.

It localises to the cytoplasm. NAD-binding protein involved in the addition of a carboxymethylaminomethyl (cmnm) group at the wobble position (U34) of certain tRNAs, forming tRNA-cmnm(5)s(2)U34. This is tRNA uridine 5-carboxymethylaminomethyl modification enzyme MnmG from Vibrio atlanticus (strain LGP32) (Vibrio splendidus (strain Mel32)).